Consider the following 173-residue polypeptide: Lipoprotein signal peptidase (173 aa).

4 consecutive transmembrane segments (helical) span residues 14 to 34 (LAWL…KYYF), 44 to 64 (IIVI…AAFS), 72 to 92 (WQRW…VVWL), and 98 to 118 (DDTW…GNLY). Active-site residues include Asp128 and Asp147. The chain crosses the membrane as a helical span at residues 139–159 (YFPAFNVADSAITVGAIMLAL).

Belongs to the peptidase A8 family.

Its subcellular location is the cell inner membrane. The catalysed reaction is Release of signal peptides from bacterial membrane prolipoproteins. Hydrolyzes -Xaa-Yaa-Zaa-|-(S,diacylglyceryl)Cys-, in which Xaa is hydrophobic (preferably Leu), and Yaa (Ala or Ser) and Zaa (Gly or Ala) have small, neutral side chains.. The protein operates within protein modification; lipoprotein biosynthesis (signal peptide cleavage). Its function is as follows. This protein specifically catalyzes the removal of signal peptides from prolipoproteins. This is Lipoprotein signal peptidase from Pseudomonas syringae pv. tomato (strain ATCC BAA-871 / DC3000).